A 615-amino-acid polypeptide reads, in one-letter code: Chaperone protein DnaK (615 aa).

T177 carries the post-translational modification Phosphothreonine; by autocatalysis. Positions 567–615 (TKESQGIAMKAYQKAQEKQAQEKGTQENTTAKNEKPQDEVVDADFEEKK) are disordered. Over residues 581–591 (AQEKQAQEKGT) the composition is skewed to basic and acidic residues. Residues 605 to 615 (EVVDADFEEKK) are compositionally biased toward acidic residues.

This sequence belongs to the heat shock protein 70 family.

Its function is as follows. Acts as a chaperone. This Onion yellows phytoplasma (strain OY-M) protein is Chaperone protein DnaK.